The sequence spans 122 residues: Large ribosomal subunit protein uL14 (122 aa).

The protein belongs to the universal ribosomal protein uL14 family. Part of the 50S ribosomal subunit. Forms a cluster with proteins L3 and L19. In the 70S ribosome, L14 and L19 interact and together make contacts with the 16S rRNA in bridges B5 and B8.

Functionally, binds to 23S rRNA. Forms part of two intersubunit bridges in the 70S ribosome. This Rubrobacter xylanophilus (strain DSM 9941 / JCM 11954 / NBRC 16129 / PRD-1) protein is Large ribosomal subunit protein uL14.